Consider the following 283-residue polypeptide: Putative pyruvate, phosphate dikinase regulatory protein (283 aa).

Residue Gly-154–Thr-161 coordinates ADP.

This sequence belongs to the pyruvate, phosphate/water dikinase regulatory protein family. PDRP subfamily.

It catalyses the reaction N(tele)-phospho-L-histidyl/L-threonyl-[pyruvate, phosphate dikinase] + ADP = N(tele)-phospho-L-histidyl/O-phospho-L-threonyl-[pyruvate, phosphate dikinase] + AMP + H(+). The enzyme catalyses N(tele)-phospho-L-histidyl/O-phospho-L-threonyl-[pyruvate, phosphate dikinase] + phosphate + H(+) = N(tele)-phospho-L-histidyl/L-threonyl-[pyruvate, phosphate dikinase] + diphosphate. Bifunctional serine/threonine kinase and phosphorylase involved in the regulation of the pyruvate, phosphate dikinase (PPDK) by catalyzing its phosphorylation/dephosphorylation. The polypeptide is Putative pyruvate, phosphate dikinase regulatory protein (Afipia carboxidovorans (strain ATCC 49405 / DSM 1227 / KCTC 32145 / OM5) (Oligotropha carboxidovorans)).